The primary structure comprises 60 residues: Large ribosomal subunit protein uL30 (60 aa).

This sequence belongs to the universal ribosomal protein uL30 family. As to quaternary structure, part of the 50S ribosomal subunit.

The protein is Large ribosomal subunit protein uL30 of Desulfotalea psychrophila (strain LSv54 / DSM 12343).